The sequence spans 302 residues: Glycine--tRNA ligase alpha subunit (302 aa).

Belongs to the class-II aminoacyl-tRNA synthetase family. In terms of assembly, tetramer of two alpha and two beta subunits.

Its subcellular location is the cytoplasm. It carries out the reaction tRNA(Gly) + glycine + ATP = glycyl-tRNA(Gly) + AMP + diphosphate. In Baumannia cicadellinicola subsp. Homalodisca coagulata, this protein is Glycine--tRNA ligase alpha subunit.